We begin with the raw amino-acid sequence, 101 residues long: Acylphosphatase (101 aa).

The Acylphosphatase-like domain maps to 12–98 (RVHVFVTGRV…EGLRGFEVKR (87 aa)). Active-site residues include Arg27 and Asn45.

It belongs to the acylphosphatase family.

The enzyme catalyses an acyl phosphate + H2O = a carboxylate + phosphate + H(+). The protein is Acylphosphatase (acyP) of Trichormus variabilis (strain ATCC 29413 / PCC 7937) (Anabaena variabilis).